Here is a 123-residue protein sequence, read N- to C-terminus: Large ribosomal subunit protein bL12 (123 aa).

This sequence belongs to the bacterial ribosomal protein bL12 family. In terms of assembly, homodimer. Part of the ribosomal stalk of the 50S ribosomal subunit. Forms a multimeric L10(L12)X complex, where L10 forms an elongated spine to which 2 to 4 L12 dimers bind in a sequential fashion. Binds GTP-bound translation factors.

Its function is as follows. Forms part of the ribosomal stalk which helps the ribosome interact with GTP-bound translation factors. Is thus essential for accurate translation. This Metamycoplasma arthritidis (strain 158L3-1) (Mycoplasma arthritidis) protein is Large ribosomal subunit protein bL12.